A 497-amino-acid chain; its full sequence is Envelope glycoprotein E (497 aa).

The Virion surface portion of the chain corresponds to 1–398; it reads MCVFQILIIV…GTIIYDILLT (398 aa). Asn60, Asn133, Asn148, Asn203, Asn277, Asn366, and Asn388 each carry an N-linked (GlcNAc...) asparagine; by host glycan. Residues 399–419 form a helical membrane-spanning segment; sequence SLSIGAIIIVIVGGVCIAILI. Residues 420 to 497 lie on the Intravirion side of the membrane; it reads RRRRRRRTRG…KIRKRLDLYH (78 aa).

It belongs to the alphaherpesvirinae glycoprotein E family. As to quaternary structure, interacts with gI. Post-translationally, phosphorylated within the acidic cluster. Phosphorylation determines whether endocytosed viral gE traffics to the trans-Golgi network or recycles to the cell membrane.

It localises to the virion membrane. The protein resides in the host cell membrane. It is found in the host cell junction. Its subcellular location is the host Golgi apparatus membrane. The protein localises to the host endosome membrane. Functionally, in epithelial cells, the heterodimer gE/gI is required for the cell-to-cell spread of the virus, by sorting nascent virions to cell junctions. Once the virus reaches the cell junctions, virus particles can spread to adjacent cells extremely rapidly through interactions with cellular receptors that accumulate at these junctions. Implicated in basolateral spread in polarized cells. In neuronal cells, gE/gI is essential for the anterograde spread of the infection throughout the host nervous system. Together with US9, the heterodimer gE/gI is involved in the sorting and transport of viral structural components toward axon tips. This is Envelope glycoprotein E (MDV096) from Gallus gallus (Chicken).